The chain runs to 1044 residues: Diacylglycerol lipase-alpha (1044 aa).

Over 1–22 (MPGIVVFRRRWSVGSDDLVLPA) the chain is Cytoplasmic. A helical membrane pass occupies residues 23–43 (IFLFLLHTTWFVILSVVLFGL). Topologically, residues 44-60 (VYNPHEACSLNLVDHGR) are extracellular. A helical transmembrane segment spans residues 61–81 (GYLGILLSCMIAEMAIIWLSM). Over 82–101 (RGGILYTEPRDSMQYVLYVR) the chain is Cytoplasmic. Residues 102–122 (LAILVIEFIYAIVGIVWLTQY) traverse the membrane as a helical segment. Topologically, residues 123-136 (YTSCNDLTAKNVTL) are extracellular. N-linked (GlcNAc...) asparagine glycosylation occurs at N133. Residues 137–157 (GMVVCNWVVILSVCITVLCVF) traverse the membrane as a helical segment. Residues 158–1044 (DPTGRTFVKL…KQDDLVISAR (887 aa)) lie on the Cytoplasmic side of the membrane. Active-site charge relay system residues include S472 and D524. S728, S730, S733, S744, S784, S786, S808, S810, S835, S849, and S954 each carry phosphoserine. The disordered stretch occupies residues 848-897 (LSKHSQDTQPLEAALGSGGVTPERPPSATIEEEEAAGGSEGGGVAPRGEL). The interval 1013–1044 (QECLATDKIRTSTPTGHGASPTKQDDLVISAR) is disordered. T1025 is modified (phosphothreonine).

The protein belongs to the AB hydrolase superfamily. Lipase family. Interacts (via C-terminal) with CAMK2A; leading to the phosphorylation and inhibition of DAGLA enzymatic activity. Interacts (via PPXXF motif) with HOMER1 and HOMER2; this interaction is required for DAGLA membrane localization. Ca(2+) serves as cofactor. Post-translationally, phosphorylated at Ser-784 and Ser-810 by CAMK2A; phosphorylation by CAMK2A inhibits diacylglycerol lipase activity. In terms of tissue distribution, highly expressed by principal cells in the hippocampus. In embryonic brains, it is present in axonal tracts, while in adults it localizes to dendritic fields, correlating with the developmental change in requirement for 2-AG synthesis from the pre- to the postsynaptic compartment. Concentrated in heads of dendritic spines throughout the hippocampal formation. Highly compartmentalized into a wide perisynaptic annulus around the postsynaptic density of axospinous contacts but not intrasynaptically (at protein level).

Its subcellular location is the cell membrane. The protein resides in the cell projection. The protein localises to the dendritic spine membrane. It localises to the postsynaptic density membrane. It is found in the early endosome membrane. The enzyme catalyses a 1,2-diacyl-sn-glycerol + H2O = a 2-acylglycerol + a fatty acid + H(+). It carries out the reaction 1-octadecanoyl-2-(5Z,8Z,11Z,14Z-eicosatetraenoyl)-sn-glycerol + H2O = 2-(5Z,8Z,11Z,14Z-eicosatetraenoyl)-glycerol + octadecanoate + H(+). It catalyses the reaction 1,2-di-(9Z-octadecenoyl)-sn-glycerol + H2O = 2-(9Z-octadecenoyl)-glycerol + (9Z)-octadecenoate + H(+). The catalysed reaction is 1-(9Z-octadecenoyl)-2-(5Z,8Z,11Z,14Z-eicosatetraenoyl)-sn-glycerol + H2O = 2-(5Z,8Z,11Z,14Z-eicosatetraenoyl)-glycerol + (9Z)-octadecenoate + H(+). The enzyme catalyses 1-(9Z-octadecenoyl)-2-octadecanoyl-sn-glycerol + H2O = 2-octadecanoylglycerol + (9Z)-octadecenoate + H(+). It carries out the reaction 1-(9Z-octadecenoyl)-2-(9Z,12Z-octadecadienoyl)-sn-glycerol + H2O = 2-(9Z,12Z-octadecadienoyl)-glycerol + (9Z)-octadecenoate + H(+). It catalyses the reaction 1-(9Z-octadecenoyl)-2-O-(5Z,8Z,11Z,14Z-eicosatetraenyl)-sn-glycerol + H2O = 2-O-(5Z,8Z,11Z,14Z)-eicosatetraenylglycerol + (9Z)-octadecenoate + H(+). With respect to regulation, inhibited by 1,2,3-triazole urea covalent inhibitor KT172, DH376 and DO34. Inhibited by p-hydroxy-mercuri-benzoate and HgCl(2), but not to PMSF. Also inhibited by RHC80267. Diacylglycerol lipase activity is inhibited by the phosphorylation of Ser-784 and Ser-810 by CAMK2A. Functionally, serine hydrolase that hydrolyzes arachidonic acid-esterified diacylglycerols (DAGs) to produce the principal endocannabinoid (eCB), 2-arachidonoylglycerol (2-AG). Preferentially hydrolyzes sn-1 fatty acids from diacylglycerols (DAG) that contain arachidonic acid (AA) esterified at the sn-2 position to biosynthesize 2-AG. Has negligible activity against other lipids including monoacylglycerols and phospholipids. Plays a key role in regulating 2-AG signaling in the central nervous system (CNS). Controls the activity of 2-AG as a retrograde messenger at neuronal synapses. Supports axonal growth during development and adult neurogenesis. Plays a role for eCB signaling in the physiological regulation of anxiety and depressive behaviors. Also regulates neuroinflammatory responses in the brain, in particular, LPS-induced microglial activation. The chain is Diacylglycerol lipase-alpha (Dagla) from Mus musculus (Mouse).